Here is a 625-residue protein sequence, read N- to C-terminus: Probable potassium transport system protein Kup 1 (625 aa).

The next 12 membrane-spanning stretches (helical) occupy residues leucine 14–leucine 34, alanine 50–valine 70, isoleucine 104–alanine 124, proline 139–isoleucine 159, leucine 170–isoleucine 190, glycine 213–leucine 233, tryptophan 249–isoleucine 269, leucine 287–isoleucine 307, isoleucine 339–phenylalanine 359, alanine 368–methionine 388, leucine 396–alanine 416, and isoleucine 421–isoleucine 441.

It belongs to the HAK/KUP transporter (TC 2.A.72) family.

It is found in the cell inner membrane. The catalysed reaction is K(+)(in) + H(+)(in) = K(+)(out) + H(+)(out). Its function is as follows. Transport of potassium into the cell. Likely operates as a K(+):H(+) symporter. The sequence is that of Probable potassium transport system protein Kup 1 from Bradyrhizobium sp. (strain ORS 278).